The primary structure comprises 481 residues: F-box protein At1g49360 (481 aa).

In terms of domain architecture, F-box spans 105–156 (LKEDLFLPSDLVRLILSRLSFKDNIRSSTVCKAWGDIAASVRVKSRRCWLLY).

This chain is F-box protein At1g49360, found in Arabidopsis thaliana (Mouse-ear cress).